The primary structure comprises 863 residues: Glycogen phosphorylase (863 aa).

Position 618 is an N6-(pyridoxal phosphate)lysine (lysine 618).

This sequence belongs to the glycogen phosphorylase family. Pyridoxal 5'-phosphate serves as cofactor.

It carries out the reaction [(1-&gt;4)-alpha-D-glucosyl](n) + phosphate = [(1-&gt;4)-alpha-D-glucosyl](n-1) + alpha-D-glucose 1-phosphate. Phosphorylase is an important allosteric enzyme in carbohydrate metabolism. Enzymes from different sources differ in their regulatory mechanisms and in their natural substrates. However, all known phosphorylases share catalytic and structural properties. The chain is Glycogen phosphorylase (glgP) from Mycobacterium tuberculosis (strain CDC 1551 / Oshkosh).